The following is an 847-amino-acid chain: Leucine--tRNA ligase (847 aa).

The short motif at 41 to 51 (PYPSGRIHMGH) is the 'HIGH' region element. The short motif at 619-623 (KMSKS) is the 'KMSKS' region element. Residue Lys622 participates in ATP binding.

Belongs to the class-I aminoacyl-tRNA synthetase family.

It localises to the cytoplasm. The enzyme catalyses tRNA(Leu) + L-leucine + ATP = L-leucyl-tRNA(Leu) + AMP + diphosphate. The polypeptide is Leucine--tRNA ligase (Cereibacter sphaeroides (strain ATCC 17023 / DSM 158 / JCM 6121 / CCUG 31486 / LMG 2827 / NBRC 12203 / NCIMB 8253 / ATH 2.4.1.) (Rhodobacter sphaeroides)).